A 703-amino-acid chain; its full sequence is DNA ligase (703 aa).

The tract at residues 1-20 (MNDNLDLFSGAAPAAPESGA) is disordered. The span at 9 to 20 (SGAAPAAPESGA) shows a compositional bias: low complexity. NAD(+) is bound by residues 53–57 (DGEYD), 102–103 (SI), and Glu-139. Lys-141 serves as the catalytic N6-AMP-lysine intermediate. Positions 162, 200, 321, and 345 each coordinate NAD(+). Zn(2+)-binding residues include Cys-439, Cys-442, Cys-457, and Cys-463. Residues 622-703 (QTAQPLAGMT…MLALLAGGDR (82 aa)) form the BRCT domain.

It belongs to the NAD-dependent DNA ligase family. LigA subfamily. Mg(2+) is required as a cofactor. The cofactor is Mn(2+).

It carries out the reaction NAD(+) + (deoxyribonucleotide)n-3'-hydroxyl + 5'-phospho-(deoxyribonucleotide)m = (deoxyribonucleotide)n+m + AMP + beta-nicotinamide D-nucleotide.. Its function is as follows. DNA ligase that catalyzes the formation of phosphodiester linkages between 5'-phosphoryl and 3'-hydroxyl groups in double-stranded DNA using NAD as a coenzyme and as the energy source for the reaction. It is essential for DNA replication and repair of damaged DNA. The polypeptide is DNA ligase (Delftia acidovorans (strain DSM 14801 / SPH-1)).